The sequence spans 590 residues: DNA primase (590 aa).

Residues 37-61 (CPFHKEKTPSFSVSPTKQFYHCFSC) form a CHC2-type zinc finger. The Toprim domain maps to 255 to 337 (GRILVVEGYM…DKSLHFLFLP (83 aa)). The Mg(2+) site is built by Glu261, Asp305, and Asp307.

Belongs to the DnaG primase family. As to quaternary structure, monomer. Interacts with DnaB. Zn(2+) serves as cofactor. Requires Mg(2+) as cofactor.

It catalyses the reaction ssDNA + n NTP = ssDNA/pppN(pN)n-1 hybrid + (n-1) diphosphate.. RNA polymerase that catalyzes the synthesis of short RNA molecules used as primers for DNA polymerase during DNA replication. The chain is DNA primase from Neisseria meningitidis serogroup A / serotype 4A (strain DSM 15465 / Z2491).